A 1091-amino-acid chain; its full sequence is MGWSNGPPSWAEMERVLNGKPRHAGVPAFDADGDVPRSRKRGAYQPPGRERVGSSVAYAELHAHSAYSFLDGASTPEELVEEAARLGLCALALTDHDGLYGAVRFAEAAAELDVRTVFGAELSLGATARTERPDPPGPHLLVLARGPEGYRRLSRQLAAAHLAGGEKGKPRYDFDALTEAAGGHWHILTGCRKGHVRQALSQGGPAAAQRALADLVDRFTPSRVSIELTHHGHPLDDERNAALAGLAPRFGVGIVATTGAHFADPSRGRLAMAMAAIRARRSLDSAAGWLAPLGGAHLRSGEEMARLFAWCPEAVTAAAELGERCAFGLQLIAPRLPPFDVPDGHTEDSWLRSLVMAGARERYGPPKSAPRAYSQIEHELKVIAQLRFPGYFLVVHDITRFCRDNDILCQGRGSAANSAVCYALGVTAVDPVANELLFERFLSPARDGPPDIDIDIESDQREKVIQYVYHKYGRDYAAQVANVITYRGRSAVRDMARALGFSPGQQDAWSKQVSHWTGQADDVDGIPEQVIDLATQIRNLPRHLGIHSGGMVICDRPIADVCPVEWARMANRSVLQWDKDDCAAIGLVKFDLLGLGMLSALHYAKDLVAEHKGIEVDLARLDLSEPAVYEMLARADSVGVFQVESRAQMATLPRLKPRVFYDLVVEVALIRPGPIQGGSVHPYIRRRNGVDPVIYEHPSMAPALRKTLGVPLFQEQLMQLAVDCAGFSAAEADQLRRAMGSKRSTERMRRLRGRFYDGMRALHGAPDEVIDRIYEKLEAFANFGFPESHALSFASLVFYSAWFKLHHPAAFCAALLRAQPMGFYSPQSLVADARRHGVAVHGPCVNASLAHATCENAGTEVRLGLGAVRYLGAELAEKLVAERTANGPFTSLPDLTSRVQLSVPQVEALATAGALGCFGMSRREALWAAGAAATGRPDRLPGVGSSSHIPALPGMSELELAAADVWATGVSPDSYPTQFLRADLDAMGVLPAERLGSVSDGDRVLIAGAVTHRQRPATAQGVTFINLEDETGMVNVLCTPGVWARHRKLAHTAPALLIRGQVQNASGAITVVAERMGRLTLAVGARSRDFR.

Positions 1–51 (MGWSNGPPSWAEMERVLNGKPRHAGVPAFDADGDVPRSRKRGAYQPPGRER) are disordered.

The protein belongs to the DNA polymerase type-C family. DnaE2 subfamily.

It is found in the cytoplasm. It catalyses the reaction DNA(n) + a 2'-deoxyribonucleoside 5'-triphosphate = DNA(n+1) + diphosphate. DNA polymerase involved in damage-induced mutagenesis and translesion synthesis (TLS). It is not the major replicative DNA polymerase. In Mycobacterium bovis (strain ATCC BAA-935 / AF2122/97), this protein is Error-prone DNA polymerase.